A 480-amino-acid polypeptide reads, in one-letter code: UDP-N-acetylmuramoylalanine--D-glutamate ligase (480 aa).

An ATP-binding site is contributed by 120–126 (GTNGKTT).

Belongs to the MurCDEF family.

The protein resides in the cytoplasm. It carries out the reaction UDP-N-acetyl-alpha-D-muramoyl-L-alanine + D-glutamate + ATP = UDP-N-acetyl-alpha-D-muramoyl-L-alanyl-D-glutamate + ADP + phosphate + H(+). It participates in cell wall biogenesis; peptidoglycan biosynthesis. Cell wall formation. Catalyzes the addition of glutamate to the nucleotide precursor UDP-N-acetylmuramoyl-L-alanine (UMA). The sequence is that of UDP-N-acetylmuramoylalanine--D-glutamate ligase from Nocardia farcinica (strain IFM 10152).